Reading from the N-terminus, the 510-residue chain is Protein disulfide-isomerase (510 aa).

The N-terminal stretch at 1–19 is a signal peptide; sequence MLRRALLCLAVAAAPGLYA. The Thioredoxin 1 domain maps to 20–136; that stretch reads DAPEEEDHVL…IVNWLKKRTG (117 aa). Active-site nucleophile residues include cysteine 55 and cysteine 58. Cysteine 55 and cysteine 58 are disulfide-bonded. Lysine 202 carries the N6-acetyllysine modification. N6-succinyllysine is present on residues lysine 224 and lysine 273. Phosphoserine is present on residues serine 333 and serine 359. Residues 351 to 477 form the Thioredoxin 2 domain; that stretch reads GKIKPHLMSQ…FKKFLESGGQ (127 aa). Catalysis depends on nucleophile residues cysteine 399 and cysteine 402. An intrachain disulfide couples cysteine 399 to cysteine 402. Phosphoserine is present on serine 429. The tract at residues 473–510 is disordered; that stretch reads ESGGQDGAGDDDDLEDLEEAEEPDMEEDDDQKAVKDEL. The span at 480–502 shows a compositional bias: acidic residues; sequence AGDDDDLEDLEEAEEPDMEEDDD. The Prevents secretion from ER signature appears at 507 to 510; sequence KDEL.

The protein belongs to the protein disulfide isomerase family. Heterodimer; heterodimerizes with the protein microsomal triglyceride transfer MTTP. Homodimer. Homodimer. Monomers and homotetramers may also occur. Interacts with P4HA2, forming a heterotetramer consisting of 2 alpha subunits (P4HA2) and 2 beta (P4HB), where P4HB plays the role of a structural subunit; this tetramer catalyzes the formation of 4-hydroxyproline in collagen. Also constitutes the structural subunit of the microsomal triacylglycerol transfer protein MTTP in mammalian cells. Stabilizes both enzymes and retain them in the ER without contributing to the catalytic activity. Binds UBQLN1. Interacts with ERO1B. Interacts with ILDR2. Interacts with ERN1/IRE1A (via N-terminus); the interaction is enhanced by phosphorylation of P4HB by FAM20C in response to endoplasmic reticulum stress and results in attenuation of ERN1 activity. In terms of processing, phosphorylation of Ser-359 by FAM20C is induced by endoplasmic reticulum stress and results in a functional switch from oxidoreductase to molecular chaperone. It also promotes interaction with ERN1.

The protein localises to the endoplasmic reticulum. Its subcellular location is the endoplasmic reticulum lumen. It is found in the melanosome. It localises to the cell membrane. The catalysed reaction is Catalyzes the rearrangement of -S-S- bonds in proteins.. This multifunctional protein catalyzes the formation, breakage and rearrangement of disulfide bonds. At the cell surface, seems to act as a reductase that cleaves disulfide bonds of proteins attached to the cell. May therefore cause structural modifications of exofacial proteins. Inside the cell, seems to form/rearrange disulfide bonds of nascent proteins. At high concentrations and following phosphorylation by FAM20C, functions as a chaperone that inhibits aggregation of misfolded proteins. At low concentrations, facilitates aggregation (anti-chaperone activity). May be involved with other chaperones in the structural modification of the TG precursor in hormone biogenesis. Also acts as a structural subunit of various enzymes such as prolyl 4-hydroxylase and microsomal triacylglycerol transfer protein MTTP. Receptor for LGALS9; the interaction retains P4HB at the cell surface of Th2 T helper cells, increasing disulfide reductase activity at the plasma membrane, altering the plasma membrane redox state and enhancing cell migration. The sequence is that of Protein disulfide-isomerase (P4HB) from Macaca fuscata fuscata (Japanese macaque).